The following is a 556-amino-acid chain: 2-succinyl-5-enolpyruvyl-6-hydroxy-3-cyclohexene-1-carboxylate synthase (556 aa).

It belongs to the TPP enzyme family. MenD subfamily. As to quaternary structure, homodimer. Requires Mg(2+) as cofactor. The cofactor is Mn(2+). Thiamine diphosphate serves as cofactor.

The catalysed reaction is isochorismate + 2-oxoglutarate + H(+) = 5-enolpyruvoyl-6-hydroxy-2-succinyl-cyclohex-3-ene-1-carboxylate + CO2. Its pathway is quinol/quinone metabolism; 1,4-dihydroxy-2-naphthoate biosynthesis; 1,4-dihydroxy-2-naphthoate from chorismate: step 2/7. It functions in the pathway quinol/quinone metabolism; menaquinone biosynthesis. Its function is as follows. Catalyzes the thiamine diphosphate-dependent decarboxylation of 2-oxoglutarate and the subsequent addition of the resulting succinic semialdehyde-thiamine pyrophosphate anion to isochorismate to yield 2-succinyl-5-enolpyruvyl-6-hydroxy-3-cyclohexene-1-carboxylate (SEPHCHC). This is 2-succinyl-5-enolpyruvyl-6-hydroxy-3-cyclohexene-1-carboxylate synthase from Salmonella typhimurium (strain LT2 / SGSC1412 / ATCC 700720).